Consider the following 161-residue polypeptide: MSIIIGIDPGSYVTGYGIIKSEKNTLKHIKSGSIFLKKHDFKKRLKIIYICIKNIINKFKPKYFVIEQIFFSKNPSSVLKLGQASCAATLAAINLDILIFEYASKKIKKILVGDGKAKKLQVKNKVCSILNLSKSIGIDTSDALAVAITHHYLINNKDKIF.

Catalysis depends on residues Asp8, Glu67, and Asp139. Mg(2+) is bound by residues Asp8, Glu67, and Asp139.

Belongs to the RuvC family. In terms of assembly, homodimer which binds Holliday junction (HJ) DNA. The HJ becomes 2-fold symmetrical on binding to RuvC with unstacked arms; it has a different conformation from HJ DNA in complex with RuvA. In the full resolvosome a probable DNA-RuvA(4)-RuvB(12)-RuvC(2) complex forms which resolves the HJ. Mg(2+) is required as a cofactor.

Its subcellular location is the cytoplasm. The enzyme catalyses Endonucleolytic cleavage at a junction such as a reciprocal single-stranded crossover between two homologous DNA duplexes (Holliday junction).. In terms of biological role, the RuvA-RuvB-RuvC complex processes Holliday junction (HJ) DNA during genetic recombination and DNA repair. Endonuclease that resolves HJ intermediates. Cleaves cruciform DNA by making single-stranded nicks across the HJ at symmetrical positions within the homologous arms, yielding a 5'-phosphate and a 3'-hydroxyl group; requires a central core of homology in the junction. The consensus cleavage sequence is 5'-(A/T)TT(C/G)-3'. Cleavage occurs on the 3'-side of the TT dinucleotide at the point of strand exchange. HJ branch migration catalyzed by RuvA-RuvB allows RuvC to scan DNA until it finds its consensus sequence, where it cleaves and resolves the cruciform DNA. The chain is Crossover junction endodeoxyribonuclease RuvC from Wigglesworthia glossinidia brevipalpis.